Here is a 253-residue protein sequence, read N- to C-terminus: Dehydration-responsive element-binding protein 1D (253 aa).

The segment covering 1–22 (MEKNTAASGQLMTSSAEATPSS) has biased composition (polar residues). The disordered stretch occupies residues 1 to 31 (MEKNTAASGQLMTSSAEATPSSPKRPAGRTK). The AP2/ERF DNA-binding region spans 39 to 98 (VFRGVRWRGCAGRWVCKVRVPGSRGDRFWIGTSDTAEETARTHDAAMLALCGASASLNFA). Residues 131–153 (RRVPAPGRGSTATATATSGDAAS) form a disordered region. Over residues 134-153 (PAPGRGSTATATATSGDAAS) the composition is skewed to low complexity.

This sequence belongs to the AP2/ERF transcription factor family. ERF subfamily.

The protein resides in the nucleus. Transcriptional activator that binds specifically to the DNA sequence 5'-[AG]CCGAC-3'. Binding to the C-repeat/DRE element mediates high salinity- and dehydration-inducible transcription. The polypeptide is Dehydration-responsive element-binding protein 1D (DREB1D) (Oryza sativa subsp. indica (Rice)).